Here is a 303-residue protein sequence, read N- to C-terminus: ASC1-like protein (303 aa).

6 helical membrane-spanning segments follow: residues 19 to 39, 81 to 101, 127 to 147, 153 to 173, 212 to 232, and 255 to 275; these read YEDF…RFLL, CIYF…EPWF, ALYM…IFWE, FGVS…SYNI, YLCL…VLWS, and YIFN…WVLI. Residues 72-284 enclose the TLC domain; sequence RKFKESAWKC…IYRMLVKQIQ (213 aa).

It is found in the endoplasmic reticulum membrane. Its function is as follows. Mediates resistance to sphinganine-analog mycotoxins (SAMs) by restoring the sphingolipid biosynthesis. Could salvage the transport of GPI-anchored proteins from the endoplasmic reticulum to the Golgi apparatus in ceramides-depleted cells after SAM exposure. The polypeptide is ASC1-like protein (Solanum lycopersicum (Tomato)).